Reading from the N-terminus, the 120-residue chain is Large ribosomal subunit protein bL17 (120 aa).

Belongs to the bacterial ribosomal protein bL17 family. In terms of assembly, part of the 50S ribosomal subunit. Contacts protein L32.

The chain is Large ribosomal subunit protein bL17 from Anoxybacillus flavithermus (strain DSM 21510 / WK1).